Consider the following 368-residue polypeptide: MSNAPILLTPGPLTTSIRTRQAMLVDWGSWDRDFNQLTASVCEQLLAIIDGSASHHCVPLQGSGTFAVEAAIGTLVPRDGKVLVLINGAYGQRLAKICKVLGRPYSTFETAEDQPTTAADVDRLLAADPAVTHVALIHCETSTGILNPLPEIAQVIKRHGKRLIIDAMSSFGALPIDAREIPFEALIAASGKCLEGVPGMGFVFAEKTALAAAEGNAHSLAMDLHDQHAYMAKTGQWRFTPPTHVVAALHEALQQYNEEGGLPARHQRYADNCKTLLDGMAAIGLRSFLPAEIQAPIIVTFHAPNDARYQFKDFYERVKAKGFILYPGKLTQVETFRVGCIGVVGADGMQAAVNAVAQVLREMEVLDI.

Residue Lys192 is modified to N6-(pyridoxal phosphate)lysine.

It belongs to the class-V pyridoxal-phosphate-dependent aminotransferase family. PhnW subfamily. In terms of assembly, homodimer. Pyridoxal 5'-phosphate serves as cofactor.

It catalyses the reaction (2-aminoethyl)phosphonate + pyruvate = phosphonoacetaldehyde + L-alanine. Functionally, involved in phosphonate degradation. The protein is 2-aminoethylphosphonate--pyruvate transaminase of Pseudomonas putida (strain GB-1).